Consider the following 1593-residue polypeptide: Nischarin (1593 aa).

The segment at 1-134 is necessary for binding to phosphoinositide-3-P; not sufficient for targeting to endosomes; that stretch reads MAAATLSFGP…GVTAALAEEL (134 aa). The 111-residue stretch at 12–122 folds into the PX domain; sequence REAEPAKEAR…AHFLHFHLYE (111 aa). Residues 121-695 are necessary for homooligomerization and targeting to endosomes; sequence YEVNGVTAAL…ERLALEWALG (575 aa). The interval 246 to 869 is interaction with PAK1; the sequence is MSVRFSATSM…LVYSDKRMVQ (624 aa). LRR repeat units lie at residues 290 to 311, 313 to 334, 335 to 356, 358 to 379, 380 to 401, and 405 to 426; these read ALTT…VKLI, KIEY…QHLY, NLVH…HTKL, NVKT…HKLY, SLVN…KSIG, and CLER…RTKV. Positions 466 to 480 are enriched in basic and acidic residues; it reads SKLSNTEKKAGEDFR. The tract at residues 466-499 is disordered; sequence SKLSNTEKKAGEDFRLPPAPCIRPGGSPPAAPAS. Over residues 482-496 the composition is skewed to pro residues; sequence PPAPCIRPGGSPPAA. Phosphoserine occurs at positions 543, 545, and 548. Residues 624–694 are a coiled coil; sequence IEAANQREEA…EERLALEWAL (71 aa). The tract at residues 629–687 is disordered; the sequence is QREEAHGEQGEEEEEEEEEEDVAENRYFEMGPPDAEEEEGSGQGEEDEEDEDEEAEEER. Composition is skewed to acidic residues over residues 638-650 and 662-685; these read GEEE…EEDV and DAEE…EAEE. The segment at 661-869 is interaction with LIMK; that stretch reads PDAEEEEGSG…LVYSDKRMVQ (209 aa). An interaction with ITGA5 region spans residues 709–807; sequence KVLWCFLIHV…ANLHEFHADL (99 aa). The interval 1016 to 1185 is disordered; it reads NPSAKPRNQP…PAGGPAPAEA (170 aa). Low complexity-rich tracts occupy residues 1038–1069 and 1081–1158; these read ETPA…LAPV and AEAP…APAP. 10 tandem repeats follow at residues 1081–1086, 1087–1092, 1093–1098, 1099–1104, 1105–1110, 1111–1116, 1123–1128, 1129–1134, 1135–1140, and 1141–1146. Residues 1081 to 1146 form a 10 X 6 AA tandem repeat of A-E-A-P-A-A region; the sequence is AEAPAAAEAP…APAAAEAPAA (66 aa). Over residues 1159–1179 the composition is skewed to pro residues; it reads NQAPAPARGPAPARGPAPAGG. Phosphothreonine is present on Thr-1371. Ser-1373 is subject to Phosphoserine.

As to quaternary structure, homooligomer. Interacts with GRB2. Interacts with PIK3R1; probably associates with the PI3-kinase complex. Interacts with IRS4. Found in a complex with ITGA5 and PAK1. Found in a complex with LIMK1 and PAK1. Interacts with ITGA5 (via cytoplasmic domain); this interaction is direct. Interacts with PAK1 (via kinase domain); this interaction is direct and is increased upon activation of PAK1. Interacts with LIMK1 (via PDZ and kinase domain); this interaction is direct. Interacts with LIMK2; this interaction depends on LIMK2 activity. Interacts with RAC1 (activated state). Interacts with STK11; this interaction may increase STK11 activity. Highly expressed in brain and kidney. Moderately expressed in heart, liver, lung and skeletal muscle. Not detected in spleen and testis.

It localises to the cell membrane. The protein resides in the cytoplasm. It is found in the early endosome. Its subcellular location is the recycling endosome. In terms of biological role, acts either as the functional imidazoline-1 receptor (I1R) candidate or as a membrane-associated mediator of the I1R signaling. Binds numerous imidazoline ligands that induces initiation of cell-signaling cascades triggering to cell survival, growth and migration. Its activation by the agonist rilmenidine induces an increase in phosphorylation of mitogen-activated protein kinases MAPK1 and MAPK3 in rostral ventrolateral medulla (RVLM) neurons that exhibited rilmenidine-evoked hypotension. Blocking its activation with efaroxan abolished rilmenidine-induced mitogen-activated protein kinase phosphorylation in RVLM neurons. Acts as a modulator of Rac-regulated signal transduction pathways. Suppresses Rac1-stimulated cell migration by interacting with PAK1 and inhibiting its kinase activity. Also blocks Pak-independent Rac signaling by interacting with RAC1 and inhibiting Rac1-stimulated NF-kB response element and cyclin D1 promoter activation. Also inhibits LIMK1 kinase activity by reducing LIMK1 'Tyr-508' phosphorylation. Inhibits Rac-induced cell migration and invasion in breast and colon epithelial cells. Inhibits lamellipodia formation, when overexpressed. Plays a role in protection against apoptosis. Involved in association with IRS4 in the enhancement of insulin activation of MAPK1 and MAPK3. When overexpressed, induces a redistribution of cell surface ITGA5 integrin to intracellular endosomal structures. The chain is Nischarin (Nisch) from Mus musculus (Mouse).